The following is a 534-amino-acid chain: Lysophosphatidylcholine acyltransferase 1 (534 aa).

The interval 1–22 (MRLRGCGPRAAPASSAGASDAR) is disordered. The Cytoplasmic portion of the chain corresponds to 1–57 (MRLRGCGPRAAPASSAGASDARLLAPPGRNPFVHELRLSALQKAQVALMTLTLFPVR). Low complexity predominate over residues 7-22 (GPRAAPASSAGASDAR). A helical; Signal-anchor for type II membrane protein membrane pass occupies residues 58–78 (LLVAAAMMLLAWPLALVASLG). Topologically, residues 79–534 (SAEKEPEQPP…GRKPVRKKLD (456 aa)) are lumenal. Residues 135-140 (HSSYFD) carry the HXXXXD motif motif. EF-hand domains follow at residues 379 to 414 (PVSDLLEDMFSLFDESGSGEVDLRECVVALSVVCRP) and 451 to 486 (VAELTVTDLFRAIDQEEKGKITFADFHRFAEMYPAF). Asp392, Ser394, Ser396, Glu398, and Glu403 together coordinate Ca(2+). A disordered region spans residues 512 to 534 (GFCADFSPENSDAGRKPVRKKLD). Residues 523–534 (DAGRKPVRKKLD) show a composition bias toward basic and acidic residues. Positions 531–534 (KKLD) match the Di-lysine motif motif.

Belongs to the 1-acyl-sn-glycerol-3-phosphate acyltransferase family. In terms of tissue distribution, erythrocytes.

It localises to the endoplasmic reticulum membrane. Its subcellular location is the golgi apparatus membrane. The protein localises to the cell membrane. It is found in the lipid droplet. It catalyses the reaction a 1-acyl-sn-glycero-3-phosphocholine + an acyl-CoA = a 1,2-diacyl-sn-glycero-3-phosphocholine + CoA. The catalysed reaction is a 1-acyl-sn-glycero-3-phosphate + an acyl-CoA = a 1,2-diacyl-sn-glycero-3-phosphate + CoA. The enzyme catalyses a 1-O-alkyl-sn-glycero-3-phosphocholine + acetyl-CoA = a 1-O-alkyl-2-acetyl-sn-glycero-3-phosphocholine + CoA. It carries out the reaction a 1-O-(1Z-alkenyl)-sn-glycero-3-phosphocholine + an acyl-CoA = a 1-O-(1Z-alkenyl)-2-acyl-sn-glycero-3-phosphocholine + CoA. It catalyses the reaction 1-acyl-sn-glycero-3-phospho-(1'-sn-glycerol) + an acyl-CoA = a 1,2-diacyl-sn-glycero-3-phospho-(1'-sn-glycerol) + CoA. The catalysed reaction is 1-hexadecanoyl-sn-glycero-3-phosphocholine + (9Z)-octadecenoyl-CoA = 1-hexadecanoyl-2-(9Z-octadecenoyl)-sn-glycero-3-phosphocholine + CoA. The enzyme catalyses 1-hexadecanoyl-sn-glycero-3-phosphocholine + hexadecanoyl-CoA = 1,2-dihexadecanoyl-sn-glycero-3-phosphocholine + CoA. It carries out the reaction 1-O-hexadecyl-sn-glycero-3-phosphocholine + hexadecanoyl-CoA = 1-O-hexadecyl-2-hexadecanoyl-sn-glycero-3-phosphocholine + CoA. It catalyses the reaction a 1-O-(1Z-alkenyl)-sn-glycero-3-phosphocholine + hexadecanoyl-CoA = 1-O-(1Z)-alkenyl-2-hexadecanoyl-sn-glycero-3-phosphocholine + CoA. The catalysed reaction is 1-hexadecanoyl-sn-glycero-3-phospho-(1'-sn-glycerol) + hexadecanoyl-CoA = 1,2-dihexadecanoyl-sn-glycero-3-phospho-(1'-sn-glycerol) + CoA. The enzyme catalyses 1-dodecanoyl-sn-glycero-3-phosphocholine + hexadecanoyl-CoA = 1-dodecanoyl-2-hexadecanoyl-sn-glycero-3-phosphocholine + CoA. It carries out the reaction 1-tetradecanoyl-sn-glycero-3-phosphocholine + hexadecanoyl-CoA = 1-tetradecanoyl-2-hexadecanoyl-sn-glycero-3-phosphocholine + CoA. It catalyses the reaction 1-O-octadecyl-sn-glycero-3-phosphocholine + hexadecanoyl-CoA = 1-O-octadecyl-2-hexadecanoyl-sn-glycero-3-phosphocholine + CoA. The catalysed reaction is 1-octadecanoyl-sn-glycero-3-phosphocholine + hexadecanoyl-CoA = 1-octadecanoyl-2-hexadecanoyl-sn-glycero-3-phosphocholine + CoA. The enzyme catalyses 1-(9Z-octadecenoyl)-sn-glycero-3-phosphocholine + hexadecanoyl-CoA = 1-(9Z-octadecenoyl)-2-hexadecanoyl-sn-glycero-3-phosphocholine + CoA. It carries out the reaction 1-eicosanoyl-sn-glycero-3-phosphocholine + hexadecanoyl-CoA = 1-eicosanoyl-2-hexadecanoyl-sn-glycero-3-phosphocholine + CoA. It catalyses the reaction hexanoyl-CoA + 1-hexadecanoyl-sn-glycero-3-phosphocholine = 1-hexadecanoyl-2-hexanoyl-sn-glycero-3-phosphocholine + CoA. The catalysed reaction is octanoyl-CoA + 1-hexadecanoyl-sn-glycero-3-phosphocholine = 1-hexadecanoyl-2-octanoyl-sn-glycero-3-phosphocholine + CoA. The enzyme catalyses decanoyl-CoA + 1-hexadecanoyl-sn-glycero-3-phosphocholine = 1-hexadecanoyl-2-decanoyl-sn-glycero-3-phosphocholine + CoA. It carries out the reaction dodecanoyl-CoA + 1-hexadecanoyl-sn-glycero-3-phosphocholine = 1-hexadecanoyl-2-dodecanoyl-sn-glycero-3-phosphocholine + CoA. It catalyses the reaction tetradecanoyl-CoA + 1-hexadecanoyl-sn-glycero-3-phosphocholine = 1-hexadecanoyl-2-tetradecanoyl-sn-glycero-3-phosphocholine + CoA. The catalysed reaction is (9Z,12Z)-octadecadienoyl-CoA + 1-hexadecanoyl-sn-glycero-3-phosphocholine = 1-hexadecanoyl-2-(9Z,12Z-octadecadienoyl)-sn-glycero-3-phosphocholine + CoA. The enzyme catalyses (4Z,7Z,10Z,13Z,16Z,19Z)-docosahexaenoyl-CoA + 1-hexadecanoyl-sn-glycero-3-phosphocholine = 1-hexadecanoyl-2-(4Z,7Z,10Z,13Z,16Z,19Z-docosahexaenoyl)-sn-glycero-3-phosphocholine + CoA. It carries out the reaction 1-hexadecanoyl-sn-glycero-3-phosphocholine + acetyl-CoA = 1-hexadecanoyl-2-acetyl-sn-glycero-3-phosphocholine + CoA. It catalyses the reaction eicosanoyl-CoA + 1-hexadecanoyl-sn-glycero-3-phosphocholine = 1-hexadecanoyl-2-eicosanoyl-sn-glycero-3-phosphocholine + CoA. The catalysed reaction is 1-O-hexadecyl-sn-glycero-3-phosphocholine + acetyl-CoA = 1-O-hexadecyl-2-acetyl-sn-glycero-3-phosphocholine + CoA. The enzyme catalyses a 1-acyl-sn-glycero-3-phosphocholine + hexadecanoyl-CoA = 1-acyl-2-hexadecanoyl-sn-glycero-3-phosphocholine + CoA. It carries out the reaction a 1-acyl-sn-glycero-3-phosphate + hexadecanoyl-CoA = 1-acyl-2-hexadecanoyl-sn-glycero-3-phosphate + CoA. It catalyses the reaction 1-acyl-sn-glycero-3-phospho-(1'-sn-glycerol) + hexadecanoyl-CoA = 1-acyl-2-hexadecanoyl-sn-glycero-3-phospho-(1'-sn-glycerol) + CoA. It functions in the pathway lipid metabolism; phospholipid metabolism. Exhibits acyltransferase activity. Exhibits acetyltransferase activity. Activity is calcium-independent. Catalyzes the conversion of lysophosphatidylcholine (1-acyl-sn-glycero-3-phosphocholine or LPC) into phosphatidylcholine (1,2-diacyl-sn-glycero-3-phosphocholine or PC). Catalyzes the conversion 1-acyl-sn-glycerol-3-phosphate (lysophosphatidic acid or LPA) into 1,2-diacyl-sn-glycerol-3-phosphate (phosphatidic acid or PA) by incorporating an acyl moiety at the sn-2 position of the glycerol backbone. Displays a clear preference for saturated fatty acyl-CoAs, and 1-myristoyl or 1-palmitoyl LPC as acyl donors and acceptors, respectively. Involved in platelet-activating factor (PAF) biosynthesis by catalyzing the conversion of the PAF precursor, 1-O-alkyl-sn-glycero-3-phosphocholine (lyso-PAF) into 1-O-alkyl-2-acetyl-sn-glycero-3-phosphocholine (PAF). May synthesize phosphatidylcholine in pulmonary surfactant, thereby playing a pivotal role in respiratory physiology. Involved in the regulation of lipid droplet number and size. The sequence is that of Lysophosphatidylcholine acyltransferase 1 (LPCAT1) from Homo sapiens (Human).